We begin with the raw amino-acid sequence, 193 residues long: Ion-translocating oxidoreductase complex subunit B (193 aa).

Residues 1–23 (MTFLFIVITLLALIFGAILGFAS) form a hydrophobic region. Residues 29–87 (EADPVVEKIDAILPQSQCGQCGYPGCKPYAEAICNGDEITKCIPGGQTTIVKIAEILGV) form the 4Fe-4S domain. Residues cysteine 46, cysteine 49, cysteine 54, cysteine 70, cysteine 110, cysteine 113, cysteine 116, cysteine 120, cysteine 140, cysteine 143, cysteine 146, and cysteine 150 each coordinate [4Fe-4S] cluster. 2 consecutive 4Fe-4S ferredoxin-type domains span residues 101–130 (KVAFIDENMCIGCTKCIQACPVDAIIGTNK) and 131–160 (AMHTIIPDLCTGCELCVAPCPTDCILMIPV).

This sequence belongs to the 4Fe4S bacterial-type ferredoxin family. RnfB subfamily. In terms of assembly, the complex is composed of six subunits: RnfA, RnfB, RnfC, RnfD, RnfE and RnfG. [4Fe-4S] cluster is required as a cofactor.

It is found in the cell inner membrane. Part of a membrane-bound complex that couples electron transfer with translocation of ions across the membrane. This Haemophilus influenzae (strain 86-028NP) protein is Ion-translocating oxidoreductase complex subunit B.